Consider the following 191-residue polypeptide: Pyridoxal 5'-phosphate synthase subunit PdxT (191 aa).

46–48 (GES) is an L-glutamine binding site. Residue cysteine 78 is the Nucleophile of the active site. L-glutamine-binding positions include arginine 105 and 133-134 (IR). Catalysis depends on charge relay system residues histidine 169 and glutamate 171.

Belongs to the glutaminase PdxT/SNO family. In the presence of PdxS, forms a dodecamer of heterodimers. Only shows activity in the heterodimer.

It catalyses the reaction aldehydo-D-ribose 5-phosphate + D-glyceraldehyde 3-phosphate + L-glutamine = pyridoxal 5'-phosphate + L-glutamate + phosphate + 3 H2O + H(+). The catalysed reaction is L-glutamine + H2O = L-glutamate + NH4(+). The protein operates within cofactor biosynthesis; pyridoxal 5'-phosphate biosynthesis. Catalyzes the hydrolysis of glutamine to glutamate and ammonia as part of the biosynthesis of pyridoxal 5'-phosphate. The resulting ammonia molecule is channeled to the active site of PdxS. This chain is Pyridoxal 5'-phosphate synthase subunit PdxT, found in Brevibacillus brevis (strain 47 / JCM 6285 / NBRC 100599).